We begin with the raw amino-acid sequence, 288 residues long: UTP--glucose-1-phosphate uridylyltransferase (288 aa).

The protein belongs to the UDPGP type 2 family.

The enzyme catalyses alpha-D-glucose 1-phosphate + UTP + H(+) = UDP-alpha-D-glucose + diphosphate. Its pathway is glycolipid metabolism; diglucosyl-diacylglycerol biosynthesis. Its function is as follows. Catalyzes the formation of UDP-glucose from glucose-1-phosphate and UTP. This is an intermediate step in the biosynthesis of diglucosyl-diacylglycerol (Glc2-DAG), i.e. the predominant glycolipid found in the S.aureus membrane, which is also used as a membrane anchor for lipoteichoic acid (LTA). This chain is UTP--glucose-1-phosphate uridylyltransferase (gtaB), found in Staphylococcus aureus (strain bovine RF122 / ET3-1).